The following is a 147-amino-acid chain: Phage-like element PBSX protein XkdM (147 aa).

This sequence to B.subtilis YqbM.

The protein is Phage-like element PBSX protein XkdM (xkdM) of Bacillus subtilis (strain 168).